A 195-amino-acid chain; its full sequence is ATP-dependent Clp protease proteolytic subunit 1 (195 aa).

Serine 96 acts as the Nucleophile in catalysis. Histidine 121 is an active-site residue.

Belongs to the peptidase S14 family. Fourteen ClpP subunits assemble into 2 heptameric rings which stack back to back to give a disk-like structure with a central cavity, resembling the structure of eukaryotic proteasomes.

The protein localises to the cytoplasm. It carries out the reaction Hydrolysis of proteins to small peptides in the presence of ATP and magnesium. alpha-casein is the usual test substrate. In the absence of ATP, only oligopeptides shorter than five residues are hydrolyzed (such as succinyl-Leu-Tyr-|-NHMec, and Leu-Tyr-Leu-|-Tyr-Trp, in which cleavage of the -Tyr-|-Leu- and -Tyr-|-Trp bonds also occurs).. In terms of biological role, cleaves peptides in various proteins in a process that requires ATP hydrolysis. Has a chymotrypsin-like activity. Plays a major role in the degradation of misfolded proteins. The chain is ATP-dependent Clp protease proteolytic subunit 1 from Prochlorococcus marinus (strain MIT 9312).